A 1936-amino-acid chain; its full sequence is Probable inactive serine/threonine-protein kinase DDB_G0278909 (1936 aa).

LRR repeat units follow at residues 61-82 (LLEK…GHLN), 83-103 (KLKR…QGLS), 104-125 (SLVY…SDCK), 126-147 (KLIN…DHFS), and 151-173 (SLKV…QKKI). The region spanning 191-230 (NLIEKKYEEFRLFVINELPKLKYLNWVLISKDERTKASKL) is the LRRCT domain. Low complexity-rich tracts occupy residues 253 to 285 (NNPN…SSNN) and 293 to 302 (TTTSVSVGSS). Disordered stretches follow at residues 253–319 (NNPN…STSF) and 347–386 (KERE…IDET). Over residues 310 to 319 (SSPNSRSTSF) the composition is skewed to polar residues. HEAT repeat units lie at residues 325 to 368 (SVGA…SSSS) and 439 to 476 (QETE…DLLY). Over residues 353 to 373 (QSTSPSSSSLSISSSSQNNNS) the composition is skewed to low complexity. The span at 516-526 (LSSSSSSSSTT) shows a compositional bias: low complexity. Disordered stretches follow at residues 516–544 (LSSS…QLDL), 599–620 (NSTL…SPKL), 660–689 (IDQN…INNN), 702–756 (QSIL…PIMK), and 769–809 (QDQP…HFKS). Positions 527 to 538 (PPQPQLPPPPPQ) are enriched in pro residues. 2 HEAT repeats span residues 574–614 (PVVS…TTPP) and 617–654 (SPKL…GSAK). The span at 600–612 (STLSTTPPLSSTT) shows a compositional bias: low complexity. Residues 660-673 (IDQNTATTPSTPSK) are compositionally biased toward polar residues. Low complexity predominate over residues 736-756 (STTTNTTPTSTPGSPSKPIMK). A compositionally biased stretch (pro residues) spans 774–785 (IVSPPQPQPQPP). The segment covering 786–805 (IVQQKQQQQQQQQQQQQPQQ) has biased composition (low complexity). One can recognise a Protein kinase domain in the interval 961–1241 (IQVGSRLGLG…ISKILSQPFQ (281 aa)). Residues 967-975 (LGLGSFGDC) and Lys988 contribute to the ATP site. Disordered regions lie at residues 1050–1075 (SHNN…NNNN) and 1261–1308 (NTTI…VKHQ). 3 stretches are compositionally biased toward low complexity: residues 1052–1075 (NNNN…NNNN), 1266–1282 (SSSS…VGSV), and 1291–1302 (NNSNTGSTGSTS). HEAT repeat units follow at residues 1317-1356 (RKMI…ALKA), 1512-1549 (FIEE…NQNC), 1553-1590 (LHNA…DIEF), 1598-1635 (NCLS…SICS), 1690-1728 (QSRL…LFSS), 1739-1775 (SMSV…VNNK), 1780-1817 (IHMM…SQEC), 1821-1858 (FLQK…DDSA), and 1863-1900 (RDNQ…KQIN).

This Dictyostelium discoideum (Social amoeba) protein is Probable inactive serine/threonine-protein kinase DDB_G0278909.